The following is a 366-amino-acid chain: Class I histocompatibility antigen, Gogo-C*0202 alpha chain (366 aa).

The N-terminal stretch at 1–24 is a signal peptide; it reads MRVMAPRTLILLLSGALALTETWA. The alpha-1 stretch occupies residues 25-114; the sequence is GSHSMRYFYT…LRGYYNQSED (90 aa). Over 25 to 308 the chain is Extracellular; sequence GSHSMRYFYT…EPSSQPTIPI (284 aa). N110 carries N-linked (GlcNAc...) asparagine glycosylation. Residues 115–206 are alpha-2; that stretch reads GSHTLQSMYG…ENGKETLQRA (92 aa). 2 disulfides stabilise this stretch: C125/C188 and C227/C283. Residues 207–298 are alpha-3; the sequence is EPPKTHVTHH…GLPEPLTLRW (92 aa). One can recognise an Ig-like C1-type domain in the interval 209-297; the sequence is PKTHVTHHPL…EGLPEPLTLR (89 aa). The interval 299-308 is connecting peptide; sequence EPSSQPTIPI. Residues 309–332 form a helical membrane-spanning segment; that stretch reads VGIVVGLAVLVVLAVLGAVVTAMM. Topologically, residues 333–366 are cytoplasmic; the sequence is CRRKSSGGKGGSCSQAACSNSAQGSDESLITCKA.

It belongs to the MHC class I family. Heterodimer of an alpha chain and a beta chain (beta-2-microglobulin).

The protein resides in the membrane. Its function is as follows. Involved in the presentation of foreign antigens to the immune system. This is Class I histocompatibility antigen, Gogo-C*0202 alpha chain from Gorilla gorilla gorilla (Western lowland gorilla).